Reading from the N-terminus, the 129-residue chain is MLNEFKQFIMRGNAIDLAVGVVMGAAFTSIVKSIVTNLIGPIIGIFAGAVDLSSLKFSIGPAVFKYGAVLNQVINFIIVGFIIFLIIKAINKFFKKNEKKEDAEAESEVKLLTDIRAELKKSNQSTNKA.

The next 3 helical transmembrane spans lie at 8–28 (FIMR…AAFT), 30–50 (IVKS…AGAV), and 67–87 (GAVL…FLII).

Belongs to the MscL family. In terms of assembly, homopentamer.

The protein localises to the cell membrane. Its function is as follows. Channel that opens in response to stretch forces in the membrane lipid bilayer. May participate in the regulation of osmotic pressure changes within the cell. This Oenococcus oeni (strain ATCC BAA-331 / PSU-1) protein is Large-conductance mechanosensitive channel.